We begin with the raw amino-acid sequence, 41 residues long: MKDFKIYLSTAPVVAFAWLTFTAGFIIEINRFFPDPLVFSF.

A helical membrane pass occupies residues 7–27; that stretch reads YLSTAPVVAFAWLTFTAGFII.

This sequence belongs to the PsaJ family.

It localises to the plastid. The protein resides in the chloroplast thylakoid membrane. In terms of biological role, may help in the organization of the PsaE and PsaF subunits. The sequence is that of Photosystem I reaction center subunit IX from Stigeoclonium helveticum (Green alga).